The following is a 202-amino-acid chain: Alpha-latrotoxin-Lm1a (202 aa).

ANK repeat units lie at residues 95-109, 110-120, 122-132, 133-138, 142-161, 163-170, 171-182, Lys184, 185-191, and 193-202; these read LYNA…VGFK, LMESPEININE, NDWPVASTLLR, SSNVNV, NSDT…DINT, NGHLNIVK, YLVEEEDLSVDG, YGIDMTI, and TALDIATDLK. A 4C4.1 epitope region spans residues 175–181; the sequence is EEDLSVD.

It belongs to the cationic peptide 01 (latrotoxin) family. 03 (alpha-latrotoxin) subfamily. In terms of assembly, homotetramer in membranes. In terms of processing, processed by furin-like proteases at both the N- and C-termini. Contains 1 disulfide bond. In terms of tissue distribution, expressed in venom gland, cephalothorax, and abdomen tissues from both males and females.

The protein resides in the secreted. The protein localises to the target cell membrane. Its function is as follows. Presynaptic neurotoxin that causes massive release of neurotransmitters from vertebrate (but not invertebrate) nerve terminals and endocrine cells via a complex mechanism involving activation of receptor(s) and toxin insertion into the plasma membrane with subsequent pore formation. Binds to neurexin-1-alpha (NRXN1) in a calcium dependent manner, adhesion G protein-coupled receptor L1 (ADGRL1, also termed latrophilin-1 and calcium-independent receptor of latrotoxin (CIRL)), and receptor-type tyrosine-protein phosphatase S (PTPRS), also termed PTP sigma. NRXN1 and PTPRS are suggested to provide a platform for binding and subsequent pore formation events. In contrast, binding to ADGRL1 does not involve oligomerization and channel formation, but direct downstream stimulation of the synaptic fusion machinery. This Latrodectus mactans (Black widow spider) protein is Alpha-latrotoxin-Lm1a.